The primary structure comprises 157 residues: Endoribonuclease YbeY (157 aa).

His114, His118, and His124 together coordinate Zn(2+).

It belongs to the endoribonuclease YbeY family. It depends on Zn(2+) as a cofactor.

Its subcellular location is the cytoplasm. Functionally, single strand-specific metallo-endoribonuclease involved in late-stage 70S ribosome quality control and in maturation of the 3' terminus of the 16S rRNA. This chain is Endoribonuclease YbeY, found in Edwardsiella ictaluri (strain 93-146).